The chain runs to 345 residues: Acetylserotonin O-methyltransferase (345 aa).

Residues tyrosine 147, tryptophan 164, aspartate 210, 235–237 (GDF), and arginine 252 contribute to the S-adenosyl-L-methionine site. Histidine 255 serves as the catalytic Proton donor/acceptor. Substrate-binding residues include aspartate 256, asparagine 302, and glutamine 306.

Belongs to the class I-like SAM-binding methyltransferase superfamily. Cation-independent O-methyltransferase family. Homodimer. In terms of tissue distribution, expressed in the pineal gland (at protein level). In the retina, very low expression is found at the mRNA level, and not at the protein level.

It catalyses the reaction N-acetylserotonin + S-adenosyl-L-methionine = melatonin + S-adenosyl-L-homocysteine + H(+). It participates in aromatic compound metabolism; melatonin biosynthesis; melatonin from serotonin: step 1/2. Functionally, catalyzes the transfer of a methyl group onto N-acetylserotonin, producing melatonin (N-acetyl-5-methoxytryptamine). In terms of biological role, does not show Acetylserotonin O-methyltransferase activity. The sequence is that of Acetylserotonin O-methyltransferase (ASMT) from Homo sapiens (Human).